The following is a 395-amino-acid chain: General transcription factor IIH subunit 2 (395 aa).

Positions 60–236 constitute a VWFA domain; it reads HLYVVVDGSR…HYKELLTHHV (177 aa). Phosphotyrosine is present on Tyr-95. Residues 291 to 308 form a C4-type zinc finger; that stretch reads CPQCRAKYCELPVECKIC.

Belongs to the GTF2H2 family. In terms of assembly, component of the TFIID-containing RNA polymerase II pre-initiation complex that is composed of TBP and at least GTF2A1, GTF2A2, GTF2E1, GTF2E2, GTF2F1, GTF2H2, GTF2H3, GTF2H4, GTF2H5, GTF2B, TCEA1, ERCC2 and ERCC3. Component of the 7-subunit TFIIH core complex composed of XPB/ERCC3, XPD/ERCC2, GTF2H1, GTF2H2, GTF2H3, GTF2H4 and GTF2H5, which is active in NER. The core complex associates with the 3-subunit CDK-activating kinase (CAK) module composed of CCNH/cyclin H, CDK7 and MNAT1 to form the 10-subunit holoenzyme (holo-TFIIH) active in transcription. Interacts with XPB, XPD, GTF2H1 and GTF2H3.

It is found in the nucleus. In terms of biological role, component of the general transcription and DNA repair factor IIH (TFIIH) core complex, which is involved in general and transcription-coupled nucleotide excision repair (NER) of damaged DNA and, when complexed to CAK, in RNA transcription by RNA polymerase II. In NER, TFIIH acts by opening DNA around the lesion to allow the excision of the damaged oligonucleotide and its replacement by a new DNA fragment. In transcription, TFIIH has an essential role in transcription initiation. When the pre-initiation complex (PIC) has been established, TFIIH is required for promoter opening and promoter escape. Phosphorylation of the C-terminal tail (CTD) of the largest subunit of RNA polymerase II by the kinase module CAK controls the initiation of transcription. The N-terminus of GTF2H2 interacts with and regulates XPD whereas an intact C-terminus is required for a successful escape of RNAP II form the promoter. The polypeptide is General transcription factor IIH subunit 2 (GTF2H2) (Bos taurus (Bovine)).